Reading from the N-terminus, the 700-residue chain is Leucine zipper putative tumor suppressor 3 (700 aa).

Disordered stretches follow at residues 1 to 20, 40 to 121, 133 to 188, and 202 to 344; these read MAPA…PAPH, RADP…SEDK, LRGS…SEPL, and FHSM…PPSP. Residues 109-121 show a composition bias toward basic and acidic residues; the sequence is NRERPGRYPSEDK. Over residues 203 to 216 the composition is skewed to polar residues; that stretch reads HSMQNLCPPQTNGT. 2 stretches are compositionally biased toward low complexity: residues 248 to 265 and 301 to 321; these read DSGR…SSYS and GTSD…MGRS. Positions 322–333 are enriched in gly residues; the sequence is GHLGSGEGGNGG. A phosphoserine mark is found at serine 343 and serine 345. 2 coiled-coil regions span residues 345-523 and 597-666; these read SALI…SLRD and TRAL…RLRE. Residues 662 to 700 are disordered; the sequence is RRLRERGAAGGSSTPTPQHGEEKKAWTPSRLERIESTEI. The segment covering 680-700 has biased composition (basic and acidic residues); sequence HGEEKKAWTPSRLERIESTEI.

The protein belongs to the LZTS3 family. In terms of assembly, interacts (via C-terminus) with SHANK3 (via PDZ domain). Interacts (via coiled coil) with SIPA1L1. Can form homooligomers.

It is found in the synapse. The protein localises to the postsynaptic density. The protein resides in the cell projection. Its subcellular location is the dendritic spine. It localises to the dendrite. It is found in the cytoplasm. The protein localises to the cytoskeleton. May be involved in promoting the maturation of dendritic spines, probably via regulating SIPA1L1 levels at the postsynaptic density of synapses. This is Leucine zipper putative tumor suppressor 3 from Mus musculus (Mouse).